The chain runs to 117 residues: Transcription elongation factor SPT4 (117 aa).

Positions 1 to 40 are interaction with SUPT5H; that stretch reads MALETVPKDLRHLRACLLCSLVKTIDQFEYDGCDNCDAYL. A C4-type zinc finger spans residues 16–36; it reads CLLCSLVKTIDQFEYDGCDNC.

This sequence belongs to the SPT4 family. As to quaternary structure, interacts with SUPT5H to form the DSIF complex. DSIF interacts with RNA polymerase II and with the positive transcription elongation factor b complex (P-TEFb complex), which is composed of CDK9 and cyclin-T.

Its subcellular location is the nucleus. Functionally, may function as a component of the DRB sensitivity-inducing factor complex (DSIF complex), which regulates transcription elongation by RNA polymerase II. Probably enhances transcriptional pausing at sites proximal to the promoter, which may in turn facilitate the assembly of an elongation competent RNA polymerase II complex. This chain is Transcription elongation factor SPT4 (supt4h1), found in Xenopus laevis (African clawed frog).